A 67-amino-acid polypeptide reads, in one-letter code: Prokaryotic ubiquitin-like protein Pup (67 aa).

Positions 1–11 (MAGQEQQQPQS) are enriched in low complexity. The tract at residues 1–47 (MAGQEQQQPQSRESEFEDDAPATPPAPGEAQASAATQGVDDLLDEID) is disordered. The interval 25 to 61 (PAPGEAQASAATQGVDDLLDEIDGVLESNAEEFVRAF) is ARC ATPase binding. A Deamidated glutamine modification is found at Gln67. An Isoglutamyl lysine isopeptide (Gln-Lys) (interchain with K-? in acceptor proteins) cross-link involves residue Gln67.

It belongs to the prokaryotic ubiquitin-like protein family. As to quaternary structure, strongly interacts with the proteasome-associated ATPase ARC through a hydrophobic interface; the interacting region of Pup lies in its C-terminal half. There is one Pup binding site per ARC hexamer ring. In terms of processing, is modified by deamidation of its C-terminal glutamine to glutamate by the deamidase Dop, a prerequisite to the subsequent pupylation process.

The protein operates within protein degradation; proteasomal Pup-dependent pathway. In terms of biological role, protein modifier that is covalently attached to lysine residues of substrate proteins, thereby targeting them for proteasomal degradation. The tagging system is termed pupylation. The protein is Prokaryotic ubiquitin-like protein Pup of Arthrobacter sp. (strain FB24).